A 386-amino-acid polypeptide reads, in one-letter code: Ribosomal large subunit pseudouridine synthase B (386 aa).

The S4 RNA-binding domain maps to E14–V75. D119 serves as the catalytic Nucleophile. The segment at A260–R386 is disordered. Basic and acidic residues-rich tracts occupy residues K267–Q276 and A284–A306. Positions R307–S321 are enriched in low complexity. Over residues E335–P354 the composition is skewed to basic and acidic residues.

The protein belongs to the pseudouridine synthase RsuA family.

It carries out the reaction uridine(2605) in 23S rRNA = pseudouridine(2605) in 23S rRNA. In terms of biological role, responsible for synthesis of pseudouridine from uracil-2605 in 23S ribosomal RNA. The protein is Ribosomal large subunit pseudouridine synthase B (rluB) of Pseudomonas aeruginosa (strain ATCC 15692 / DSM 22644 / CIP 104116 / JCM 14847 / LMG 12228 / 1C / PRS 101 / PAO1).